A 204-amino-acid polypeptide reads, in one-letter code: ADP-ribosylation factor-like protein 15 (204 aa).

Residues 39–46, 82–86, and 142–145 each bind GTP; these read GLTGSGKT, ELGGA, and NHQD.

Belongs to the small GTPase superfamily. Arf family.

This chain is ADP-ribosylation factor-like protein 15 (ARL15), found in Pongo abelii (Sumatran orangutan).